Here is a 474-residue protein sequence, read N- to C-terminus: uncharacterized protein (474 aa).

Residues 3–23 (LTLWLVLGAVGVGAVGTGVGF) traverse the membrane as a helical segment. The tract at residues 171–296 (VSDGSSSKTR…KETKDRTKVD (126 aa)) is disordered. Positions 180–210 (RTPKKTKTSKKKPIKKKSSKSKSSKGSKKQK) are enriched in basic residues. Over residues 231 to 253 (TRSQSKQQKGQEQATDQTDSEGV) the composition is skewed to polar residues. Residues 257–266 (EGADNTDTEL) show a composition bias toward acidic residues. The segment covering 267 to 281 (VETTAETTEQEATTK) has biased composition (low complexity). The span at 282-296 (STKDTKETKDRTKVD) shows a compositional bias: basic and acidic residues.

Its subcellular location is the membrane. This is an uncharacterized protein from Mycoplasma pneumoniae (strain ATCC 29342 / M129 / Subtype 1) (Mycoplasmoides pneumoniae).